A 305-amino-acid polypeptide reads, in one-letter code: Putative monooxygenase p33MONOX (305 aa).

A disordered region spans residues 37 to 56 (LEDPAPMTPPPSDMGSVPWK). A Phosphothreonine modification is found at Thr-44. Residues 67–77 (LAKVEEGEASL) carry the Flavin-containing monooxygenase motif motif. Disordered stretches follow at residues 158–236 (QSGE…KYDS) and 259–305 (QANR…PTGF). Over residues 169–183 (PASAQSTPSTTPHSS) the composition is skewed to low complexity. Thr-175 is modified (phosphothreonine). 2 positions are modified to phosphoserine: Ser-182 and Ser-183. Over residues 193–210 (TSGSSTALPGPNPSTMDS) the composition is skewed to polar residues.

This sequence belongs to the P33MONOX family. Interacts with NELFB, NOL12 and PRNP. Down-regulated in the occipital lobe of an early stage Alzheimer disease patients.

The protein resides in the cytoplasm. Its function is as follows. Potential NADPH-dependent oxidoreductase. May be involved in the regulation of neuronal survival, differentiation and axonal outgrowth. The polypeptide is Putative monooxygenase p33MONOX (KIAA1191) (Homo sapiens (Human)).